A 127-amino-acid chain; its full sequence is uncharacterized protein (127 aa).

Residues 1–34 form a disordered region; it reads MKNPESSGVSSSPQIQRVSPSSSSTSPSPPSIGT. Positions 9-34 are enriched in low complexity; it reads VSSSPQIQRVSPSSSSTSPSPPSIGT. A run of 2 helical transmembrane segments spans residues 47–67 and 84–104; these read IAAVVVAVDVVDIMSVDPLAM and TIAVDSITLLYTPICLCYLLV.

Its subcellular location is the membrane. This is an uncharacterized protein from Saccharomyces cerevisiae (strain ATCC 204508 / S288c) (Baker's yeast).